The sequence spans 223 residues: Adapter protein MecA (223 aa).

Belongs to the MecA family. In terms of assembly, homodimer.

In terms of biological role, enables the recognition and targeting of unfolded and aggregated proteins to the ClpC protease or to other proteins involved in proteolysis. This chain is Adapter protein MecA, found in Limosilactobacillus reuteri (strain DSM 20016) (Lactobacillus reuteri).